A 216-amino-acid chain; its full sequence is GTPase IMAP family member GIMD1 (216 aa).

The 212-residue stretch at 5-216 (KMIINLAVLG…ENHFQVLSFT (212 aa)) folds into the AIG1-type G domain. Residues 14–22 (GKTQSGKSS), Ser35, and 147–149 (HAE) each bind GTP.

It belongs to the TRAFAC class TrmE-Era-EngA-EngB-Septin-like GTPase superfamily. AIG1/Toc34/Toc159-like paraseptin GTPase family. IAN subfamily.

This chain is GTPase IMAP family member GIMD1 (Gimd1), found in Rattus norvegicus (Rat).